The chain runs to 370 residues: Protein commissureless 1 (370 aa).

The Extracellular segment spans residues 1–136 (MISTTDYPTV…DADMHVIINY (136 aa)). Positions 108–131 (LRDRSEESGESSWWSQIFGDADMH) are required for vesicular localization. Residues 137–157 (LWIGVVSSLVILSLVFILFSC) form a helical membrane-spanning segment. At 158-370 (YFYRKFRTWK…CASLVVVVAA (213 aa)) the chain is on the cytoplasmic side. 2 consecutive short sequence motifs (PY-motif) follow at residues 220–223 (PPCY) and 229–232 (LPSY). The tract at residues 227–237 (TGLPSYDEALH) is interaction with Nedd4. The tract at residues 287 to 312 (VEEDKADSSSSTSASASPSSSESSNL) is disordered. Low complexity predominate over residues 294–312 (SSSSTSASASPSSSESSNL).

Belongs to the commissureless family. Interacts (probably via PY-motifs) with Nedd4 (via WW2 domain). Interacts with Robo. In terms of processing, ubiquitinated by Nedd4; which promotes endocytosis of the comm/robo complex and comm proteasomal degradation. Not ubiquitinated by Nedd4.

The protein resides in the cytoplasmic vesicle membrane. It localises to the cell membrane. In terms of biological role, controls axon guidance across the CNS midline by preventing the delivery of Robo to the growth cone. The sequence is that of Protein commissureless 1 from Drosophila melanogaster (Fruit fly).